The primary structure comprises 89 residues: Small ribosomal subunit protein uS15 (89 aa).

The protein belongs to the universal ribosomal protein uS15 family. As to quaternary structure, part of the 30S ribosomal subunit. Forms a bridge to the 50S subunit in the 70S ribosome, contacting the 23S rRNA.

Its function is as follows. One of the primary rRNA binding proteins, it binds directly to 16S rRNA where it helps nucleate assembly of the platform of the 30S subunit by binding and bridging several RNA helices of the 16S rRNA. Functionally, forms an intersubunit bridge (bridge B4) with the 23S rRNA of the 50S subunit in the ribosome. This is Small ribosomal subunit protein uS15 from Saccharopolyspora erythraea (strain ATCC 11635 / DSM 40517 / JCM 4748 / NBRC 13426 / NCIMB 8594 / NRRL 2338).